The chain runs to 99 residues: A-type ATP synthase subunit F (99 aa).

It belongs to the V-ATPase F subunit family. In terms of assembly, has multiple subunits with at least A(3), B(3), C, D, E, F, H, I and proteolipid K(x).

Its subcellular location is the cell membrane. Component of the A-type ATP synthase that produces ATP from ADP in the presence of a proton gradient across the membrane. This chain is A-type ATP synthase subunit F, found in Methanococcus maripaludis (strain C6 / ATCC BAA-1332).